Consider the following 275-residue polypeptide: Polyamine aminopropyltransferase (275 aa).

Positions 2-235 constitute a PABS domain; sequence DLWLREGQIE…GFWSFTIGSK (234 aa). Gln31 serves as a coordination point for S-methyl-5'-thioadenosine. His62 and Asp86 together coordinate spermidine. S-methyl-5'-thioadenosine contacts are provided by residues Glu106 and 137–138; that span reads DG. Catalysis depends on Asp155, which acts as the Proton acceptor. Residue 155–158 participates in spermidine binding; the sequence is DSTD.

The protein belongs to the spermidine/spermine synthase family. In terms of assembly, homodimer or homotetramer.

Its subcellular location is the cytoplasm. It carries out the reaction S-adenosyl 3-(methylsulfanyl)propylamine + putrescine = S-methyl-5'-thioadenosine + spermidine + H(+). It participates in amine and polyamine biosynthesis; spermidine biosynthesis; spermidine from putrescine: step 1/1. Functionally, catalyzes the irreversible transfer of a propylamine group from the amino donor S-adenosylmethioninamine (decarboxy-AdoMet) to putrescine (1,4-diaminobutane) to yield spermidine. The sequence is that of Polyamine aminopropyltransferase from Clostridium kluyveri (strain NBRC 12016).